The sequence spans 475 residues: Pyruvate kinase (475 aa).

R33 lines the substrate pocket. 3 residues coordinate K(+): N35, S37, and D67. Residue 35-38 (NFSH) participates in ATP binding. R74 and K155 together coordinate ATP. E220 contacts Mg(2+). 3 residues coordinate substrate: G243, D244, and T276. D244 lines the Mg(2+) pocket.

The protein belongs to the pyruvate kinase family. As to quaternary structure, homotetramer. Mg(2+) serves as cofactor. Requires K(+) as cofactor.

The enzyme catalyses pyruvate + ATP = phosphoenolpyruvate + ADP + H(+). It participates in carbohydrate degradation; glycolysis; pyruvate from D-glyceraldehyde 3-phosphate: step 5/5. This Corynebacterium glutamicum (strain ATCC 13032 / DSM 20300 / JCM 1318 / BCRC 11384 / CCUG 27702 / LMG 3730 / NBRC 12168 / NCIMB 10025 / NRRL B-2784 / 534) protein is Pyruvate kinase (pyk).